Reading from the N-terminus, the 318-residue chain is Basic leucine zipper (bZIP) transcription factor atfB (318 aa).

Disordered stretches follow at residues 79–100 and 114–164; these read LKNT…KKLQ and FNSS…EKRE. The interval 160-199 is basic motif; that stretch reads REKREKFLERNRLAASKCRQKKKEHTKLLETRFREVSSKK. The region spanning 160 to 223 is the bZIP domain; it reads REKREKFLER…LNLKNEMLRH (64 aa). A leucine-zipper region spans residues 202-216; the sequence is LESEIEHLRSEVLNL. The disordered stretch occupies residues 247 to 304; that stretch reads TPNRDLVSPMRSPEQMTASTPHGLSFGFDGPMQLPSEMGSPLDQRRDSEQSIMTESSY.

Belongs to the bZIP family. ATF subfamily.

Its subcellular location is the nucleus. Its function is as follows. Transcription factor that acts as a key player in the regulatory circuit that integrates secondary metabolism and cellular response to oxidative stress. Regulates the genes involved in development, stress response, and secondary metabolism through direct binding to their promoters. Particularly involved in the resistance to oxidative stress in asexual conidiospores. Binds aflatoxin gene promoters carrying the cAMP-response element (CRE1) under aflatoxin-inducing conditions. This Aspergillus parasiticus (strain ATCC 56775 / NRRL 5862 / SRRC 143 / SU-1) protein is Basic leucine zipper (bZIP) transcription factor atfB.